The following is a 464-amino-acid chain: MEFLPLFHNLRGSRVLVVGGGEIALRKSRLIADAGAVLRVVAPEIETQLRELVAHSGGELILRGYSESDLDGCVLIIAATDDEPLNAQVSRDARLRCVPVNVVDAPALCTVIFPAIVDRSPLVIAVSSGGDAPVLARLIRAKLETWIPSSYGQLAGLAARFRNQVKGLLPNVQQRRAFWEEVFQGAIADRQLAGQGAEAERLLIAKIAGEPPAQTGEVYLVGAGPGDPDLLTFRALRLMQQADVVLYDRLVAPTILDLCRRDAERVYVGKRRAEHAVPQEQINQQLVALAKQGKRVVRLKGGDPFIFGRGGEEIEELAAHGIPFQVVPGITAASGCAAYAGIPLTHRDHAQSVRFITGHLKNGTTDLPWSDLVAPAQTLVFYMGLIGLPVICAELIKHGRSADTPAALVQQGTTVNQRVFTGTLANLPQLVAEHEVHAPTLVIIGEVVKLREKLAWFEGAQATL.

The interval 1–203 (MEFLPLFHNL…GQGAEAERLL (203 aa)) is precorrin-2 dehydrogenase /sirohydrochlorin ferrochelatase. Residues 22–23 (EI) and 43–44 (PE) contribute to the NAD(+) site. The residue at position 128 (Ser-128) is a Phosphoserine. The segment at 216 to 464 (GEVYLVGAGP…AWFEGAQATL (249 aa)) is uroporphyrinogen-III C-methyltransferase. Pro-225 is an S-adenosyl-L-methionine binding site. Asp-248 functions as the Proton acceptor in the catalytic mechanism. Residue Lys-270 is the Proton donor of the active site. S-adenosyl-L-methionine contacts are provided by residues 301–303 (GGD), Ile-306, 331–332 (TA), Met-383, and Gly-412.

This sequence in the N-terminal section; belongs to the precorrin-2 dehydrogenase / sirohydrochlorin ferrochelatase family. It in the C-terminal section; belongs to the precorrin methyltransferase family.

The catalysed reaction is uroporphyrinogen III + 2 S-adenosyl-L-methionine = precorrin-2 + 2 S-adenosyl-L-homocysteine + H(+). It catalyses the reaction precorrin-2 + NAD(+) = sirohydrochlorin + NADH + 2 H(+). It carries out the reaction siroheme + 2 H(+) = sirohydrochlorin + Fe(2+). It participates in cofactor biosynthesis; adenosylcobalamin biosynthesis; precorrin-2 from uroporphyrinogen III: step 1/1. It functions in the pathway cofactor biosynthesis; adenosylcobalamin biosynthesis; sirohydrochlorin from precorrin-2: step 1/1. The protein operates within porphyrin-containing compound metabolism; siroheme biosynthesis; precorrin-2 from uroporphyrinogen III: step 1/1. Its pathway is porphyrin-containing compound metabolism; siroheme biosynthesis; siroheme from sirohydrochlorin: step 1/1. It participates in porphyrin-containing compound metabolism; siroheme biosynthesis; sirohydrochlorin from precorrin-2: step 1/1. Multifunctional enzyme that catalyzes the SAM-dependent methylations of uroporphyrinogen III at position C-2 and C-7 to form precorrin-2 via precorrin-1. Then it catalyzes the NAD-dependent ring dehydrogenation of precorrin-2 to yield sirohydrochlorin. Finally, it catalyzes the ferrochelation of sirohydrochlorin to yield siroheme. The chain is Siroheme synthase from Pseudomonas syringae pv. tomato (strain ATCC BAA-871 / DC3000).